The primary structure comprises 164 residues: Pheromone-binding protein 2 (164 aa).

The signal sequence occupies residues 1 to 22 (MIRKVLLSVLLAVLMTINLGQA). Cystine bridges form between Cys41–Cys76, Cys72–Cys130, and Cys119–Cys139.

The protein belongs to the PBP/GOBP family. As to expression, antenna.

Functionally, this major soluble protein in olfactory sensilla of male moths might serve to solubilize the extremely hydrophobic pheromone molecules and to transport pheromone through the aqueous lymph to receptors located on olfactory cilia. The sequence is that of Pheromone-binding protein 2 from Antheraea pernyi (Chinese oak silk moth).